The following is a 460-amino-acid chain: A-type ATP synthase subunit B (460 aa).

This sequence belongs to the ATPase alpha/beta chains family. As to quaternary structure, has multiple subunits with at least A(3), B(3), C, D, E, F, H, I and proteolipid K(x).

It localises to the cell membrane. Functionally, component of the A-type ATP synthase that produces ATP from ADP in the presence of a proton gradient across the membrane. The B chain is a regulatory subunit. This chain is A-type ATP synthase subunit B, found in Thermofilum pendens (strain DSM 2475 / Hrk 5).